The primary structure comprises 104 residues: Large ribosomal subunit protein uL24 (104 aa).

It belongs to the universal ribosomal protein uL24 family. Part of the 50S ribosomal subunit.

One of two assembly initiator proteins, it binds directly to the 5'-end of the 23S rRNA, where it nucleates assembly of the 50S subunit. Its function is as follows. One of the proteins that surrounds the polypeptide exit tunnel on the outside of the subunit. The sequence is that of Large ribosomal subunit protein uL24 from Clostridium botulinum (strain Alaska E43 / Type E3).